A 551-amino-acid polypeptide reads, in one-letter code: Adenine deaminase (551 aa).

This sequence belongs to the metallo-dependent hydrolases superfamily. Adenine deaminase family. Mn(2+) is required as a cofactor.

It carries out the reaction adenine + H2O + H(+) = hypoxanthine + NH4(+). This chain is Adenine deaminase, found in Leuconostoc mesenteroides subsp. mesenteroides (strain ATCC 8293 / DSM 20343 / BCRC 11652 / CCM 1803 / JCM 6124 / NCDO 523 / NBRC 100496 / NCIMB 8023 / NCTC 12954 / NRRL B-1118 / 37Y).